The following is a 489-amino-acid chain: Probable 26S proteasome non-ATPase regulatory subunit 3 (489 aa).

The interval 1-23 (MTQDVEMKEVPAPAPSNSVTAAT) is disordered. Residues 241–422 (CRYLFYLGKI…GWMVSKETGD (182 aa)) form the PCI domain. The tract at residues 454-489 (PANSHKDKESAEKRRERQQQEQELAKHIAEEDDDEF) is disordered. Residues 457–482 (SHKDKESAEKRRERQQQEQELAKHIA) are compositionally biased toward basic and acidic residues.

It belongs to the proteasome subunit S3 family. In terms of assembly, the 26S proteasome is composed of a core protease, known as the 20S proteasome, capped at one or both ends by the 19S regulatory complex (RC). The RC is composed of at least 18 different subunits in two subcomplexes, the base and the lid, which form the portions proximal and distal to the 20S proteolytic core, respectively.

It localises to the nucleus. Its function is as follows. Acts as a regulatory subunit of the 26 proteasome which is involved in the ATP-dependent degradation of ubiquitinated proteins. The sequence is that of Probable 26S proteasome non-ATPase regulatory subunit 3 (21D7) from Daucus carota (Wild carrot).